A 1295-amino-acid chain; its full sequence is MNKIYSLKYSAATGGLIAVSELAKRVSGKTNRKLVATMLSLAVAGTVNAANIDISNVWARDYLDLAQNKGIFQPGATDVTITLKNGDKFSFHNLSIPDFSGAAASGAATAIGGSYSVTVAHNKKNPQAAETQVYAQSSYRVVDRRNSNDFEIQRLNKFVVETVGATPAETNPTTYSDALERYGIVTSDGSKKIIGFRAGSGGTSFINGESKISTNSAYSHDLLSASLFEVTQWDSYGMMIYKNDKTFRNLEIFGDSGSGAYLYDNKLEKWVLVGTTHGIASVNGDQLTWITKYNDKLVSELKDTYSHKINLNGNNVTIKNTDITLHQNNADTTGTQEKITKDKDIVFTNGGDVLFKDNLDFGSGGIIFDEGHEYNINGQGFTFKGAGIDIGKESIVNWNALYSSDDVLHKIGPGTLNVQKKQGANIKIGEGNVILNEEGTFNNIYLASGNGKVILNKDNSLGNDQYAGIFFTKRGGTLDLNGHNQTFTRIAATDDGTTITNSDTTKEAVLAINNEDSYIYHGNINGNIKLTHNINSQDKKTNAKLILDGSVNTKNDVEVSNASLTMQGHATEHAIFRSSANHCSLVFLCGTDWVTVLKETESSYNKKFNSDYKSNNQQTSFDQPDWKTGVFKFDTLHLNNADFSISRNANVEGNISANKSAITIGDKNVYIDNLAGKNITNNGFDFKQTISTNLSIGETKFTGGITAHNSQIAIGDQAVVTLNGATFLDNTPISIDKGAKVIAQNSMFTTKGIDISGELTMMGIPEQNSKTVTPGLHYAADGFRLSGGNANFIARNMASVTGNIYADDAATITLGQPETETPTISSAYQAWAETLLYGFDTAYRGAITAPKATVSMNNAIWHLNSQSSINRLETKDSMVRFTGDNGKFTTLTVNNLTIDDSAFVLRANLAQADQLVVNKSLSGKNNLLLVDFIEKNGNSNGLNIDLVSAPKGTAVDVFKATTRSIGFSDVTPVIEQKNDTDKATWTLIGYKSVANADAAKKATLLMSGGYKAFLAEVNNLNKRMGDLRDINGESGAWARIISGTGSAGGGFSDNYTHVQVGADNKHELDGLDLFTGVTMTYTDSHAGSDAFSGETKSVGAGLYASAMFESGAYIDLIGKYVHHDNEYTATFAGLGTRDYSSHSWYAGAEVGYRYHVTDSAWIEPQAELVYGAVSGKQFSWKDQGMNLTMKDKDFNPLIGRTGVDVGKSFSGKDWKVTARAGLGYQFDLFANGETVLRDASGEKRIKGEKDGRMLMNVGLNAEIRDNLRFGLEFEKSAFGKYNVDNAINANFRYSF.

An N-terminal signal peptide occupies residues Met1–Ala49. The 250-residue stretch at Asn51–Glu300 folds into the Peptidase S6 domain. Active-site charge relay system residues include His121, Asp149, and Ser256. Residues Asp1029 to Phe1295 enclose the Autotransporter domain.

Cleaved to release the mature protein from the outer membrane.

The protein localises to the periplasm. It localises to the secreted. Its subcellular location is the cell surface. The protein resides in the cell outer membrane. Inhibited by phenylmethylsulfonyl fluoride and Pefabloc. Its function is as follows. Shows serine protease activity and displays cytophatic activity, including elongation, rounding, and detachment of a proportion of the cells from monolayer in culture. Triggers vacuolation within the cytoplasm of the human bladder and kidney cells. In Escherichia coli O6:H1 (strain CFT073 / ATCC 700928 / UPEC), this protein is Serine protease sat autotransporter (sat).